The sequence spans 289 residues: Pantothenate synthetase (289 aa).

Residue 30–37 coordinates ATP; the sequence is MGYLHKGH. His37 (proton donor) is an active-site residue. Position 61 (Gln61) interacts with (R)-pantoate. Gln61 contributes to the beta-alanine binding site. Position 147–150 (147–150) interacts with ATP; sequence GEKD. Gln153 serves as a coordination point for (R)-pantoate. ATP contacts are provided by residues Val176 and 184–187; that span reads CSSR.

This sequence belongs to the pantothenate synthetase family. As to quaternary structure, homodimer.

The protein resides in the cytoplasm. It carries out the reaction (R)-pantoate + beta-alanine + ATP = (R)-pantothenate + AMP + diphosphate + H(+). Its pathway is cofactor biosynthesis; (R)-pantothenate biosynthesis; (R)-pantothenate from (R)-pantoate and beta-alanine: step 1/1. Functionally, catalyzes the condensation of pantoate with beta-alanine in an ATP-dependent reaction via a pantoyl-adenylate intermediate. In Allorhizobium ampelinum (strain ATCC BAA-846 / DSM 112012 / S4) (Agrobacterium vitis (strain S4)), this protein is Pantothenate synthetase.